Reading from the N-terminus, the 433-residue chain is Tol-Pal system protein TolB (433 aa).

The N-terminal stretch at 1–21 (MIKRLRGLLVLLCCVAGMAMA) is a signal peptide.

The protein belongs to the TolB family. In terms of assembly, the Tol-Pal system is composed of five core proteins: the inner membrane proteins TolA, TolQ and TolR, the periplasmic protein TolB and the outer membrane protein Pal. They form a network linking the inner and outer membranes and the peptidoglycan layer.

It localises to the periplasm. In terms of biological role, part of the Tol-Pal system, which plays a role in outer membrane invagination during cell division and is important for maintaining outer membrane integrity. This is Tol-Pal system protein TolB from Pseudomonas entomophila (strain L48).